The primary structure comprises 432 residues: Adenosylhomocysteinase (432 aa).

Residues Thr-57, Asp-131, and Glu-156 each contribute to the substrate site. 157–159 is a binding site for NAD(+); the sequence is TTT. Ser-183 is modified (phosphoserine). Positions 186 and 190 each coordinate substrate. Lys-186 bears the N6-(2-hydroxyisobutyryl)lysine mark. Residue Tyr-193 is modified to Phosphotyrosine. Residues 222 to 227, Glu-243, Asn-248, 299 to 301, Asn-346, His-353, Lys-426, 426 to 430, and Tyr-430 contribute to the NAD(+) site; these read GDVGKG, IGH, and KPDHY.

This sequence belongs to the adenosylhomocysteinase family. Homotetramer. Interaction with AHCYL1. NAD(+) is required as a cofactor.

It is found in the cytoplasm. The protein localises to the melanosome. Its subcellular location is the nucleus. The protein resides in the endoplasmic reticulum. The catalysed reaction is S-adenosyl-L-homocysteine + H2O = L-homocysteine + adenosine. It participates in amino-acid biosynthesis; L-homocysteine biosynthesis; L-homocysteine from S-adenosyl-L-homocysteine: step 1/1. In terms of biological role, catalyzes the hydrolysis of S-adenosyl-L-homocysteine to form adenosine and homocysteine. Binds copper ions. The polypeptide is Adenosylhomocysteinase (Ahcy) (Rattus norvegicus (Rat)).